The primary structure comprises 85 residues: MGNNPSALKRARQNLKRNLRNVSVKSELKTIEKRCMNLIREGKKEEALEFFKFVSKKLDTAARKRIIHRNKAARKKSNLSILLLR.

The protein belongs to the bacterial ribosomal protein bS20 family.

Its function is as follows. Binds directly to 16S ribosomal RNA. This Borrelia turicatae (strain 91E135) protein is Small ribosomal subunit protein bS20.